Reading from the N-terminus, the 91-residue chain is Acyl carrier protein (91 aa).

Residues 6–81 enclose the Carrier domain; sequence EEIIAELGQI…DIVAYIQKLE (76 aa). The residue at position 41 (Ser-41) is an O-(pantetheine 4'-phosphoryl)serine.

This sequence belongs to the acyl carrier protein (ACP) family. In terms of processing, 4'-phosphopantetheine is transferred from CoA to a specific serine of apo-ACP by AcpS. This modification is essential for activity because fatty acids are bound in thioester linkage to the sulfhydryl of the prosthetic group.

The protein localises to the cytoplasm. The protein operates within lipid metabolism; fatty acid biosynthesis. In terms of biological role, carrier of the growing fatty acid chain in fatty acid biosynthesis. This Rhodococcus erythropolis (strain PR4 / NBRC 100887) protein is Acyl carrier protein.